The chain runs to 307 residues: Small ribosomal subunit biogenesis GTPase RsgA (307 aa).

Residues 78-240 (HKTAFGHLIA…VIDTPGIKEL (163 aa)) enclose the CP-type G domain. Residues 128-131 (NKSD) and 182-190 (GHSGVGKST) contribute to the GTP site. Residues Cys-264, Cys-269, His-271, and Cys-277 each contribute to the Zn(2+) site.

This sequence belongs to the TRAFAC class YlqF/YawG GTPase family. RsgA subfamily. As to quaternary structure, monomer. Associates with 30S ribosomal subunit, binds 16S rRNA. Zn(2+) is required as a cofactor.

It localises to the cytoplasm. One of several proteins that assist in the late maturation steps of the functional core of the 30S ribosomal subunit. Helps release RbfA from mature subunits. May play a role in the assembly of ribosomal proteins into the subunit. Circularly permuted GTPase that catalyzes slow GTP hydrolysis, GTPase activity is stimulated by the 30S ribosomal subunit. This Cytophaga hutchinsonii (strain ATCC 33406 / DSM 1761 / CIP 103989 / NBRC 15051 / NCIMB 9469 / D465) protein is Small ribosomal subunit biogenesis GTPase RsgA.